The chain runs to 76 residues: Vasotab (76 aa).

A signal peptide spans 1-20; sequence MKFALFSVLVVLLIATFVAA. Residues 21 to 76 enclose the Kazal-like domain; sequence DECPRICTADYRPVCGTPSGGRRSANRTFGNQCSLNAHNCLNKGDTYDKLHDGECK. 3 disulfide bridges follow: cysteine 23–cysteine 60, cysteine 27–cysteine 53, and cysteine 35–cysteine 75.

In terms of tissue distribution, expressed by the salivary gland.

The protein resides in the secreted. In terms of biological role, vasodilator protein that inhibits vasoconstriction of isolated rat femoral artery induced by phenylephrine. Since platelet aggregation and vasoconstriction are key hemostatic responses, particularly in small wounds, this protein likely participates in the antihemostatic responses during blood feeding. Blocks L-type calcium channels (Cav1/CACNA1) in left ventricular myocytes isolated from rat hearts. The protein is Vasotab of Hybomitra bimaculata (Horse fly).